Consider the following 460-residue polypeptide: Cysteine--tRNA ligase (460 aa).

C28 contributes to the Zn(2+) binding site. Positions M30–H40 match the 'HIGH' region motif. Positions 209, 234, and 238 each coordinate Zn(2+). The 'KMSKS' region signature appears at K266–S270. Position 269 (K269) interacts with ATP.

The protein belongs to the class-I aminoacyl-tRNA synthetase family. In terms of assembly, monomer. Zn(2+) serves as cofactor.

It localises to the cytoplasm. It carries out the reaction tRNA(Cys) + L-cysteine + ATP = L-cysteinyl-tRNA(Cys) + AMP + diphosphate. This is Cysteine--tRNA ligase from Pseudomonas putida (strain GB-1).